The following is a 539-amino-acid chain: Chaperonin GroEL (539 aa).

ATP contacts are provided by residues 29–32 (TLGP), 86–90 (DGTTT), Gly-413, 477–479 (NAA), and Asp-493.

This sequence belongs to the chaperonin (HSP60) family. Forms a cylinder of 14 subunits composed of two heptameric rings stacked back-to-back. Interacts with the co-chaperonin GroES.

The protein localises to the cytoplasm. The enzyme catalyses ATP + H2O + a folded polypeptide = ADP + phosphate + an unfolded polypeptide.. In terms of biological role, together with its co-chaperonin GroES, plays an essential role in assisting protein folding. The GroEL-GroES system forms a nano-cage that allows encapsulation of the non-native substrate proteins and provides a physical environment optimized to promote and accelerate protein folding. This is Chaperonin GroEL from Clavibacter michiganensis subsp. michiganensis (strain NCPPB 382).